The primary structure comprises 365 residues: MAEKEVPLTAVKVEALVVMKIIKHGSQAFPTTATGSIVGMDVDGTLEITNSFPFPVVEVPAESHFDNTAPNPAAAAPRAKANAAYEAEMVRMMREVNVDANNVGWYTSANMGNFINMNVIENQFFYQKEMNERTVALVHDVSRSAQGSLSLRAFRLSPKFMAAFKENKFTSEELQKSNLRYQDILVELPVEIHNSHLITSFIHQLQTPTQATPSDLPPSLAALESSQYAKSSVLAPNFDNLSLSIDPFLEKNCDLLLDSIEVHHTETNNFQYYQRSLAREQAKITAWQNKRKTENASRAALKQPLLPEDEWQRLFKLPQEPSRLDSMLNSRQVEQYARQVDSFVSATTGKMFAVKGNLLPGETAK.

The 150-residue stretch at V11–F160 folds into the MPN domain.

The protein belongs to the eIF-3 subunit H family. In terms of assembly, component of the eukaryotic translation initiation factor 3 (eIF-3) complex.

The protein resides in the cytoplasm. Its function is as follows. Component of the eukaryotic translation initiation factor 3 (eIF-3) complex, which is involved in protein synthesis of a specialized repertoire of mRNAs and, together with other initiation factors, stimulates binding of mRNA and methionyl-tRNAi to the 40S ribosome. The eIF-3 complex specifically targets and initiates translation of a subset of mRNAs involved in cell proliferation. This Aspergillus niger (strain ATCC MYA-4892 / CBS 513.88 / FGSC A1513) protein is Eukaryotic translation initiation factor 3 subunit H.